The sequence spans 262 residues: Putative hydro-lyase cu1581 (262 aa).

Belongs to the D-glutamate cyclase family.

The protein is Putative hydro-lyase cu1581 of Corynebacterium urealyticum (strain ATCC 43042 / DSM 7109).